A 228-amino-acid chain; its full sequence is Endonuclease V (228 aa).

2 residues coordinate Mg(2+): D43 and D109.

It belongs to the endonuclease V family. It depends on Mg(2+) as a cofactor.

It is found in the cytoplasm. It catalyses the reaction Endonucleolytic cleavage at apurinic or apyrimidinic sites to products with a 5'-phosphate.. In terms of biological role, DNA repair enzyme involved in the repair of deaminated bases. Selectively cleaves double-stranded DNA at the second phosphodiester bond 3' to a deoxyinosine leaving behind the intact lesion on the nicked DNA. The sequence is that of Endonuclease V from Dictyoglomus turgidum (strain DSM 6724 / Z-1310).